A 358-amino-acid polypeptide reads, in one-letter code: Feruloyl CoA ortho-hydroxylase F6H1-3 (358 aa).

The Fe2OG dioxygenase domain occupies Thr-200–Pro-308. Tyr-216 lines the 2-oxoglutarate pocket. Residues His-231, Asp-233, and His-289 each coordinate Fe cation. 2-oxoglutarate contacts are provided by Arg-299 and Ser-301.

Belongs to the iron/ascorbate-dependent oxidoreductase family. The cofactor is L-ascorbate. Requires Fe(2+) as cofactor. As to expression, mostly expressed in tubers, and, at low levels, in underground stems, stems, leaves and petioles.

The catalysed reaction is (E)-feruloyl-CoA + 2-oxoglutarate + O2 = (E)-6-hydroxyferuloyl-CoA + succinate + CO2. It participates in phenylpropanoid metabolism. In terms of biological role, 2-oxoglutarate (OG)- and Fe(II)-dependent dioxygenase (2OGD) involved in scopoletin biosynthesis. Converts feruloyl CoA into 6'-hydroxyferuloyl CoA, and, at low efficiency, caffeoyl-CoA into 6'-hydroxycaffeate, but has no activity with p-coumaroyl-CoA. The sequence is that of Feruloyl CoA ortho-hydroxylase F6H1-3 from Ipomoea batatas (Sweet potato).